Consider the following 493-residue polypeptide: Uridine 5'-monophosphate synthase (493 aa).

The segment at 1 to 207 is OPRTase; that stretch reads MVAQNSDKMR…VAKYIAAVQI (207 aa). Residues 208–233 form a domain linker region; it reads NSDGTFVGGDKGDVVRANDLQRTKLT. The segment at 234-493 is OMPdecase; sequence YENRANLAKS…WAAYQDRVAK (260 aa). K320 is a catalytic residue.

The protein in the N-terminal section; belongs to the purine/pyrimidine phosphoribosyltransferase family. In the C-terminal section; belongs to the OMP decarboxylase family.

The catalysed reaction is orotidine 5'-phosphate + diphosphate = orotate + 5-phospho-alpha-D-ribose 1-diphosphate. It carries out the reaction orotidine 5'-phosphate + H(+) = UMP + CO2. It functions in the pathway pyrimidine metabolism; UMP biosynthesis via de novo pathway; UMP from orotate: step 1/2. The protein operates within pyrimidine metabolism; UMP biosynthesis via de novo pathway; UMP from orotate: step 2/2. This chain is Uridine 5'-monophosphate synthase (r-l), found in Drosophila melanogaster (Fruit fly).